A 319-amino-acid polypeptide reads, in one-letter code: L-galactose dehydrogenase (319 aa).

Tyr-59 (proton donor) is an active-site residue. Residues 122–269 (HCHDIEFGSL…ANKEISSVLV (148 aa)) enclose the SIS domain. Substrate is bound at residue His-124.

This sequence belongs to the aldo/keto reductase family.

The catalysed reaction is L-galactose + NAD(+) = L-galactono-1,4-lactone + NADH + H(+). In terms of biological role, catalyzes the oxidation of L-galactose to L-galactono-1,4-lactone in the presence of NAD(+). Uses NAD(+) as a hydrogen acceptor much more efficiently than NADP(+). In Arabidopsis thaliana (Mouse-ear cress), this protein is L-galactose dehydrogenase (LGALDH).